Here is a 136-residue protein sequence, read N- to C-terminus: Heme-binding protein Rv0203 (136 aa).

Residues 1-27 (MKTGTATTRRRLLAVLIALALPGAAVA) form the signal peptide. An intrachain disulfide couples C41 to C115. Residues Y60, H64, and H90 each contribute to the heme site.

In terms of assembly, dimer of dimers.

It localises to the secreted. Its function is as follows. Part of a heme-iron acquisition system. Acts by binding heme and delivering it to the membrane proteins MmpL3 and MmpL11. Can use free heme or heme from host hemoglobin. This Mycobacterium tuberculosis (strain ATCC 25618 / H37Rv) protein is Heme-binding protein Rv0203.